Reading from the N-terminus, the 1176-residue chain is Carbamoyl phosphate synthase arginine-specific large chain (1176 aa).

Residues 1–11 (MLRSISIASRA) constitute a mitochondrion transit peptide. The tract at residues 70–465 (SRSPDVKKVL…SLQKAIRQVD (396 aa)) is carboxyphosphate synthetic domain. Residues Arg-197, Arg-237, Gly-243, Gly-244, Lys-273, Leu-275, Glu-280, Gly-306, Thr-307, His-308, Gln-348, and Glu-362 each contribute to the ATP site. Residues 201–391 (VQALNEIDIP…LAYTAAKIAL (191 aa)) enclose the ATP-grasp 1 domain. Mg(2+) is bound by residues Gln-348, Glu-362, and Asn-364. Mn(2+) is bound by residues Gln-348, Glu-362, and Asn-364. An oligomerization domain region spans residues 466–610 (PNFAGFEAYW…YTSYNATTHD (145 aa)). A carbamoyl phosphate synthetic domain region spans residues 611–997 (VKFDNGTMVL…AYWAALLSVN (387 aa)). Residues 734–931 (SSILDSIGVD…FIDTASAAIM (198 aa)) form the ATP-grasp 2 domain. Arg-770, Gln-809, Ile-811, Glu-816, Gly-841, Val-842, His-843, Ser-844, Gln-884, and Glu-902 together coordinate ATP. Mg(2+) contacts are provided by Gln-884, Glu-902, and Asn-904. 3 residues coordinate Mn(2+): Gln-884, Glu-902, and Asn-904. The tract at residues 998-1137 (GMKLPKANSG…NPIPYSEGFK (140 aa)) is allosteric domain. The 156-residue stretch at 999–1154 (MKLPKANSGI…RDFVGEAATT (156 aa)) folds into the MGS-like domain.

The protein belongs to the CarB family. In terms of assembly, heterodimer composed of 2 chains; the small (or glutamine) chain promotes the hydrolysis of glutamine to ammonia, which is used by the large (or ammonia) chain to synthesize carbamoyl phosphate. Requires Mg(2+) as cofactor. The cofactor is Mn(2+).

It is found in the mitochondrion. The catalysed reaction is hydrogencarbonate + L-glutamine + 2 ATP + H2O = carbamoyl phosphate + L-glutamate + 2 ADP + phosphate + 2 H(+). It carries out the reaction hydrogencarbonate + NH4(+) + 2 ATP = carbamoyl phosphate + 2 ADP + phosphate + 2 H(+). Its pathway is amino-acid biosynthesis; L-arginine biosynthesis; carbamoyl phosphate from bicarbonate: step 1/1. Its function is as follows. Large subunit of the arginine-specific carbamoyl phosphate synthase (CPSase). CPSase catalyzes the formation of carbamoyl phosphate from the ammonia moiety of glutamine, hydrogencarbonate, and phosphate donated by ATP, constituting the first step of 2 biosynthetic pathways, one leading to arginine and/or urea and the other to pyrimidine nucleotides. The large subunit (synthetase) binds the substrates ammonia (free or transferred from glutamine from the small subunit), hydrogencarbonate and ATP and carries out an ATP-coupled ligase reaction, activating hydrogencarbonate by forming carboxy phosphate which reacts with ammonia to form carbamoyl phosphate. This chain is Carbamoyl phosphate synthase arginine-specific large chain (argA), found in Cutaneotrichosporon cutaneum (Yeast).